Reading from the N-terminus, the 143-residue chain is Putative pre-16S rRNA nuclease (143 aa).

It belongs to the YqgF nuclease family.

The protein localises to the cytoplasm. Functionally, could be a nuclease involved in processing of the 5'-end of pre-16S rRNA. The sequence is that of Putative pre-16S rRNA nuclease from Leuconostoc citreum (strain KM20).